A 344-amino-acid chain; its full sequence is MALLKTMPIIRSLTRGKSIRLLQKQSTKRTNPCVYLEAKAVEQTPATEFNSILQEIISTEYNYSVDLKKTLNEIIMPIEGQSMEREAIGICTCFKTLNQLHTKLYQQMISSGSPVYSLSQSLPAFRDVYHMYTINLSGISAIEKIISDPSSCNSQLLIPLQHLLRYPIHLARVCKMLRKYPFLNGDFRMAVKTLDDFRELCSYIDQEKAREESYQVLSALCGNQGVAVDIPRHIKFKGSVIPATSFIYDFNACVFCDDGLVVWTRYVKKIEMKAVSIEQCLRVDELSNSILVCTLNMKGKLLNRHLAPQTMAASVFLKWYHERAGISNGKENKLNRLKVVNAKT.

The 160-residue stretch at 48 to 207 folds into the DH domain; that stretch reads EFNSILQEII…RELCSYIDQE (160 aa).

The protein localises to the cytoplasm. It localises to the nucleus. In terms of biological role, has a role in meiosis. The protein is Meiotically up-regulated gene 10 protein (mug10) of Schizosaccharomyces pombe (strain 972 / ATCC 24843) (Fission yeast).